The chain runs to 180 residues: Regulator of G-protein signaling 8 (180 aa).

Phosphoserine is present on serine 26. The RGS domain occupies 56 to 171 (SFDVLLSHKY…FLRSKMYLDL (116 aa)).

In terms of assembly, interacts with GNAO1. Interacts with GNAI3.

The protein localises to the cell membrane. It localises to the membrane. Its subcellular location is the perikaryon. The protein resides in the cell projection. It is found in the dendrite. The protein localises to the nucleus. In terms of biological role, regulates G protein-coupled receptor signaling cascades, including signaling via muscarinic acetylcholine receptor CHRM2 and dopamine receptor DRD2. Inhibits signal transduction by increasing the GTPase activity of G protein alpha subunits, thereby driving them into their inactive GDP-bound form. Modulates the activity of potassium channels that are activated in response to DRD2 and CHRM2 signaling. The protein is Regulator of G-protein signaling 8 (RGS8) of Homo sapiens (Human).